A 384-amino-acid polypeptide reads, in one-letter code: Opsin-3 (384 aa).

Residues 1–62 are Extracellular-facing; sequence MATNFTQELY…VSKYWHYVLA (62 aa). N-linked (GlcNAc...) asparagine glycosylation occurs at Asn-4. The helical transmembrane segment at 63–83 threads the bilayer; the sequence is LIYTMLMVTSLTGNGIVIWIF. At 84-94 the chain is on the cytoplasmic side; sequence STSKSLRSASN. Residues 95-115 form a helical membrane-spanning segment; that stretch reads MFVINLAVFDLMMMLEMPLLI. Residues 116 to 132 lie on the Extracellular side of the membrane; the sequence is MNSFYQRLVGYQLGCDV. A disulfide bridge connects residues Cys-130 and Cys-207. The helical transmembrane segment at 133–153 threads the bilayer; the sequence is YAVLGSLSGIGGAITNAVIAF. The Cytoplasmic portion of the chain corresponds to 154–171; that stretch reads DRYKTISSPLDGRINTVQ. A helical membrane pass occupies residues 172–192; sequence AGLLIAFTWFWALPFTILPAF. The Extracellular segment spans residues 193–219; sequence RIWGRFVPEGFLTTCSFDYFTEDQDTE. A helical transmembrane segment spans residues 220–240; it reads VFVACIFVWSYCIPMALICYF. At 241–284 the chain is on the cytoplasmic side; that stretch reads YSQLFGAVRLHERMLQEQAKKMNVKSLASNKEDNSRSVEIRIAK. A helical membrane pass occupies residues 285-305; the sequence is VAFTIFFLFICAWTPYAFVTM. The Extracellular portion of the chain corresponds to 306–312; sequence TGAFGDR. Residues 313–333 form a helical membrane-spanning segment; the sequence is TLLTPIATMIPAVCCKVVSCI. The Cytoplasmic portion of the chain corresponds to 334–384; it reads DPWVYAINHPRYRAELQKRLPWMGVREQDPDAVSTTTSVATAGFQPPAAEA.

Belongs to the G-protein coupled receptor 1 family. Opsin subfamily. In terms of tissue distribution, in the retina, expression is essentially uniformly distributed but a higher level is seen in the ventral region where the B-cells are localized.

It localises to the membrane. Visual pigments are the light-absorbing molecules that mediate vision. They consist of an apoprotein, opsin, covalently linked to cis-retinal. May play a role in photoperiodic photoreception. This is Opsin-3 (OP3) from Manduca sexta (Tobacco hawkmoth).